Here is a 159-residue protein sequence, read N- to C-terminus: ATP synthase subunit b 2 (159 aa).

The helical transmembrane segment at 1-21 (MDATFWALVALIIFVGILLYM) threads the bilayer.

Belongs to the ATPase B chain family. As to quaternary structure, F-type ATPases have 2 components, F(1) - the catalytic core - and F(0) - the membrane proton channel. F(1) has five subunits: alpha(3), beta(3), gamma(1), delta(1), epsilon(1). F(0) has three main subunits: a(1), b(2) and c(10-14). The alpha and beta chains form an alternating ring which encloses part of the gamma chain. F(1) is attached to F(0) by a central stalk formed by the gamma and epsilon chains, while a peripheral stalk is formed by the delta and b chains.

It is found in the cell inner membrane. F(1)F(0) ATP synthase produces ATP from ADP in the presence of a proton or sodium gradient. F-type ATPases consist of two structural domains, F(1) containing the extramembraneous catalytic core and F(0) containing the membrane proton channel, linked together by a central stalk and a peripheral stalk. During catalysis, ATP synthesis in the catalytic domain of F(1) is coupled via a rotary mechanism of the central stalk subunits to proton translocation. Functionally, component of the F(0) channel, it forms part of the peripheral stalk, linking F(1) to F(0). The protein is ATP synthase subunit b 2 of Chelativorans sp. (strain BNC1).